Reading from the N-terminus, the 489-residue chain is DNA-dependent metalloprotease SPRTN (489 aa).

Met1 carries the post-translational modification N-acetylmethionine. The SprT-like domain occupies 45 to 212; the sequence is LQALFVQFND…KTCGGTYIKI (168 aa). A Zn(2+)-binding site is contributed by His111. Residue Glu112 is part of the active site. Residues His115 and His130 each coordinate Zn(2+). Lys230 carries the N6-acetyllysine modification. An SHP-box motif is present at residues 253-261; the sequence is FSGKGYVLG. Residue Ser268 is modified to Phosphoserine. Lys303 participates in a covalent cross-link: Glycyl lysine isopeptide (Lys-Gly) (interchain with G-Cter in SUMO2). The PIP-box motif lies at 325 to 332; sequence QNVLSNYF. A Glycyl lysine isopeptide (Lys-Gly) (interchain with G-Cter in SUMO2); alternate cross-link involves residue Lys341. Lys341 is covalently cross-linked (Glycyl lysine isopeptide (Lys-Gly) (interchain with G-Cter in ubiquitin); alternate). Residues 357–409 are disordered; that stretch reads GNIPKNSVSSSSQRRVSSSKISLRNSSKVTESASVMPSQDVSGSEDTFPNKRP. Lys361 is covalently cross-linked (Glycyl lysine isopeptide (Lys-Gly) (interchain with G-Cter in SUMO2)). A compositionally biased stretch (low complexity) spans 363–383; it reads SVSSSSQRRVSSSKISLRNSS. 2 positions are modified to phosphoserine; by CHEK1: Ser373 and Ser374. Lys376 is covalently cross-linked (Glycyl lysine isopeptide (Lys-Gly) (interchain with G-Cter in SUMO2); alternate). A Glycyl lysine isopeptide (Lys-Gly) (interchain with G-Cter in ubiquitin); alternate cross-link involves residue Lys376. A Phosphoserine; by CHEK1 modification is found at Ser383. Residues 384-403 show a composition bias toward polar residues; sequence KVTESASVMPSQDVSGSEDT. Positions 402–413 match the Nuclear localization signal motif; that stretch reads DTFPNKRPRLED. Lys414 is covalently cross-linked (Glycyl lysine isopeptide (Lys-Gly) (interchain with G-Cter in ubiquitin)). Residues Lys423 and Lys424 each participate in a glycyl lysine isopeptide (Lys-Gly) (interchain with G-Cter in SUMO2) cross-link. The disordered stretch occupies residues 428–453; it reads KSSGNDPKYSTTTAQNSSSSSSQSKM. Lys435 is covalently cross-linked (Glycyl lysine isopeptide (Lys-Gly) (interchain with G-Cter in ubiquitin)). A compositionally biased stretch (low complexity) spans 437 to 451; sequence STTTAQNSSSSSSQS. The UBZ4-type zinc finger occupies 453 to 480; the sequence is MVNCPVCQNEVLESQINEHLDWCLEGDS. Residues Cys456, Cys459, His471, and Cys475 each contribute to the Zn(2+) site. Lys484 is covalently cross-linked (Glycyl lysine isopeptide (Lys-Gly) (interchain with G-Cter in SUMO2)).

The protein belongs to the Spartan family. In terms of assembly, homodimer. Interacts (VIA PIP-box) with PCNA (when ubiquitinated). Interacts (via its SHP-box) with VCP/p97. Interacts with RAD18. Interacts with KCTD13 and POLD3. The cofactor is Zn(2+). In terms of processing, autocatalytically cleaved in response to double-stranded DNA-binding: autocatalytic cleavage takes place in trans and leads to inactivation. Post-translationally, monoubiquitinated; monoubiquitination promotes exclusion from chromatin. Deubiquitinated by VCPIP1: deubiquitination is required for subsequent acetylation and recruitment to chromatin and DNA damage sites. Acetylated following deubiquitination by VCPIP1, leading to recruitment to chromatin and DNA damage sites. In terms of processing, phosphorylation by CHEK1 promotes recruitment to chromatin.

It localises to the nucleus. Its subcellular location is the chromosome. Its activity is regulated as follows. DNA-binding activates the protease activity: single-stranded DNA-binding specifically activates ability to cleave covalent DNA-protein cross-links (DPCs). In contrast, double-stranded DNA-binding specifically activates autocatalytic cleavage, and subsequent inactivation. Functionally, DNA-dependent metalloendopeptidase that mediates the proteolytic cleavage of covalent DNA-protein cross-links (DPCs) during DNA synthesis, thereby playing a key role in maintaining genomic integrity. DPCs are highly toxic DNA lesions that interfere with essential chromatin transactions, such as replication and transcription, and which are induced by reactive agents, such as UV light or formaldehyde. Associates with the DNA replication machinery and specifically removes DPCs during DNA synthesis. Catalyzes proteolytic cleavage of the HMCES DNA-protein cross-link following unfolding by the BRIP1/FANCJ helicase. Acts as a pleiotropic protease for DNA-binding proteins cross-linked with DNA, such as TOP1, TOP2A, histones H3 and H4. Mediates degradation of DPCs that are not ubiquitinated, while it is not able to degrade ubiquitinated DPCs. SPRTN activation requires polymerase collision with DPCs followed by helicase bypass of DPCs. Involved in recruitment of VCP/p97 to sites of DNA damage. Also acts as an activator of CHEK1 during normal DNA replication by mediating proteolytic cleavage of CHEK1, thereby promoting CHEK1 removal from chromatin and subsequent activation. Does not activate CHEK1 in response to DNA damage. May also act as a 'reader' of ubiquitinated PCNA: recruited to sites of UV damage and interacts with ubiquitinated PCNA and RAD18, the E3 ubiquitin ligase that monoubiquitinates PCNA. Facilitates chromatin association of RAD18 and is required for efficient PCNA monoubiquitination, promoting a feed-forward loop to enhance PCNA ubiquitination and translesion DNA synthesis. The polypeptide is DNA-dependent metalloprotease SPRTN (Homo sapiens (Human)).